Consider the following 407-residue polypeptide: uncharacterized protein (407 aa).

A Glycyl lysine isopeptide (Lys-Gly) (interchain with G-Cter in ubiquitin) cross-link involves residue Lys22.

This sequence belongs to the SVF1 family.

The protein resides in the cytoplasm. This is an uncharacterized protein from Saccharomyces cerevisiae (strain ATCC 204508 / S288c) (Baker's yeast).